Reading from the N-terminus, the 62-residue chain is Large ribosomal subunit protein bL32 (62 aa).

Belongs to the bacterial ribosomal protein bL32 family.

The chain is Large ribosomal subunit protein bL32 (rpmF) from Treponema pallidum (strain Nichols).